The sequence spans 147 residues: Protein MC014 (147 aa).

The protein localises to the host nucleus. This is Protein MC014 (MC014) from Homo sapiens (Human).